The following is a 43-amino-acid chain: Neurotrophin-3 (43 aa).

The protein belongs to the NGF-beta family.

Its subcellular location is the secreted. Functionally, seems to promote the survival of visceral and proprioceptive sensory neurons. The chain is Neurotrophin-3 (ntf3) from Raja clavata (Thornback ray).